Reading from the N-terminus, the 474-residue chain is Ribulose bisphosphate carboxylase/oxygenase activase, chloroplastic (474 aa).

A chloroplast-targeting transit peptide spans 1-58 (MAAAVSTVGAINRAPLSLNGSGSGAVSAPASTFLGKKVVTVSRFAQSNKKSNGSFKVL). Threonine 78 bears the Phosphothreonine; by CK2 mark. 165–172 (GGKGQGKS) contributes to the ATP binding site. Threonine 283 carries the phosphothreonine modification.

Belongs to the RuBisCO activase family. Post-translationally, phosphorylated at Thr-78 by CK2.

The protein localises to the plastid. Its subcellular location is the chloroplast stroma. It localises to the chloroplast. It is found in the plastoglobule. In terms of biological role, activation of RuBisCO (ribulose-1,5-bisphosphate carboxylase/oxygenase; EC 4.1.1.39) involves the ATP-dependent carboxylation of the epsilon-amino group of lysine leading to a carbamate structure. The sequence is that of Ribulose bisphosphate carboxylase/oxygenase activase, chloroplastic (RCA) from Arabidopsis thaliana (Mouse-ear cress).